The chain runs to 696 residues: Elongation factor G (696 aa).

Positions 8-290 (ERYRNIGVMA…AVLDYLPSPA (283 aa)) constitute a tr-type G domain. Residues 17–24 (AHIDAGKT), 88–92 (DTPGH), and 142–145 (NKMD) contribute to the GTP site.

It belongs to the TRAFAC class translation factor GTPase superfamily. Classic translation factor GTPase family. EF-G/EF-2 subfamily.

The protein resides in the cytoplasm. Its function is as follows. Catalyzes the GTP-dependent ribosomal translocation step during translation elongation. During this step, the ribosome changes from the pre-translocational (PRE) to the post-translocational (POST) state as the newly formed A-site-bound peptidyl-tRNA and P-site-bound deacylated tRNA move to the P and E sites, respectively. Catalyzes the coordinated movement of the two tRNA molecules, the mRNA and conformational changes in the ribosome. The protein is Elongation factor G of Nitrosospira multiformis (strain ATCC 25196 / NCIMB 11849 / C 71).